Reading from the N-terminus, the 155-residue chain is Small ribosomal subunit protein uS7c (155 aa).

This sequence belongs to the universal ribosomal protein uS7 family. In terms of assembly, part of the 30S ribosomal subunit.

It is found in the plastid. The protein localises to the chloroplast. Functionally, one of the primary rRNA binding proteins, it binds directly to 16S rRNA where it nucleates assembly of the head domain of the 30S subunit. The sequence is that of Small ribosomal subunit protein uS7c (rps7) from Sagittaria latifolia (Broadleaf arrowhead).